Consider the following 382-residue polypeptide: Dual-specificity RNA methyltransferase RlmN (382 aa).

E96 serves as the catalytic Proton acceptor. The Radical SAM core domain maps to 102–340; it reads QNGRGTLCVS…VTVRTTRGDD (239 aa). The cysteines at positions 109 and 345 are disulfide-linked. [4Fe-4S] cluster-binding residues include C116, C120, and C123. S-adenosyl-L-methionine is bound by residues 170–171, S202, 224–226, and N302; these read GE and SLH. C345 serves as the catalytic S-methylcysteine intermediate.

This sequence belongs to the radical SAM superfamily. RlmN family. The cofactor is [4Fe-4S] cluster.

The protein resides in the cytoplasm. It carries out the reaction adenosine(2503) in 23S rRNA + 2 reduced [2Fe-2S]-[ferredoxin] + 2 S-adenosyl-L-methionine = 2-methyladenosine(2503) in 23S rRNA + 5'-deoxyadenosine + L-methionine + 2 oxidized [2Fe-2S]-[ferredoxin] + S-adenosyl-L-homocysteine. The enzyme catalyses adenosine(37) in tRNA + 2 reduced [2Fe-2S]-[ferredoxin] + 2 S-adenosyl-L-methionine = 2-methyladenosine(37) in tRNA + 5'-deoxyadenosine + L-methionine + 2 oxidized [2Fe-2S]-[ferredoxin] + S-adenosyl-L-homocysteine. Functionally, specifically methylates position 2 of adenine 2503 in 23S rRNA and position 2 of adenine 37 in tRNAs. m2A2503 modification seems to play a crucial role in the proofreading step occurring at the peptidyl transferase center and thus would serve to optimize ribosomal fidelity. This is Dual-specificity RNA methyltransferase RlmN from Ectopseudomonas mendocina (strain ymp) (Pseudomonas mendocina).